The following is a 374-amino-acid chain: tRNA-specific 2-thiouridylase MnmA (374 aa).

Residues 12–19 (GMSGGVDS) and M38 contribute to the ATP site. The interaction with target base in tRNA stretch occupies residues 98 to 100 (NPD). C103 acts as the Nucleophile in catalysis. An intrachain disulfide couples C103 to C202. G128 lines the ATP pocket. The interaction with tRNA stretch occupies residues 152–154 (KDQ). The active-site Cysteine persulfide intermediate is the C202. The segment at 316 to 317 (RY) is interaction with tRNA.

This sequence belongs to the MnmA/TRMU family.

It is found in the cytoplasm. The catalysed reaction is S-sulfanyl-L-cysteinyl-[protein] + uridine(34) in tRNA + AH2 + ATP = 2-thiouridine(34) in tRNA + L-cysteinyl-[protein] + A + AMP + diphosphate + H(+). Its function is as follows. Catalyzes the 2-thiolation of uridine at the wobble position (U34) of tRNA, leading to the formation of s(2)U34. In Vibrio parahaemolyticus serotype O3:K6 (strain RIMD 2210633), this protein is tRNA-specific 2-thiouridylase MnmA.